Here is a 140-residue protein sequence, read N- to C-terminus: Small ribosomal subunit protein uS12 (140 aa).

Positions 1–28 (MPTINQLVRKSRKALEKKSTAPALQKGY) are disordered. 3-methylthioaspartic acid is present on D102. Positions 119–140 (GVDKRRQSRSKYGAKRPKEAKK) are disordered. The span at 124–140 (RQSRSKYGAKRPKEAKK) shows a compositional bias: basic residues.

Belongs to the universal ribosomal protein uS12 family. Part of the 30S ribosomal subunit. Contacts proteins S8 and S17. May interact with IF1 in the 30S initiation complex.

In terms of biological role, with S4 and S5 plays an important role in translational accuracy. Its function is as follows. Interacts with and stabilizes bases of the 16S rRNA that are involved in tRNA selection in the A site and with the mRNA backbone. Located at the interface of the 30S and 50S subunits, it traverses the body of the 30S subunit contacting proteins on the other side and probably holding the rRNA structure together. The combined cluster of proteins S8, S12 and S17 appears to hold together the shoulder and platform of the 30S subunit. This Clostridioides difficile (strain 630) (Peptoclostridium difficile) protein is Small ribosomal subunit protein uS12.